A 393-amino-acid chain; its full sequence is Nucleosome assembly protein 1-like 1-B (393 aa).

The segment covering 1–10 (MANIDNKEQT) has biased composition (basic and acidic residues). A disordered region spans residues 1 to 38 (MANIDNKEQTELDQQDMEDVEDVEEEETGEEANSKARQ). Over residues 11-30 (ELDQQDMEDVEDVEEEETGE) the composition is skewed to acidic residues. Residues 126–151 (YEPTEEECEWKVDEEEDIAEDLKEKA) carry the NAP1L motif motif. Residues 274 to 280 (IKKKQKH) carry the Nuclear localization signal motif. Positions 347 to 377 (AIEDDDDDYDEEGEEADDEEGEEEADEDHDP) are enriched in acidic residues. Residues 347–393 (AIEDDDDDYDEEGEEADDEEGEEEADEDHDPDFDPKKAQNPAECKQQ) are disordered.

The protein belongs to the nucleosome assembly protein (NAP) family. As to quaternary structure, forms homomultimers. Interacts with histone b4. Interacts with the B-type cyclins ccnb1 and ccnb2. Phosphorylated by cyclin B-cdc2 kinase complexes.

It localises to the cytoplasm. The protein localises to the nucleus. Functionally, acts as a chaperone for the linker histone to facilitate deposition of histone B4 onto linker DNA. Required for both remodeling of sperm chromatin into nucleosomes, and linker histone binding to nucleosome core dimers. Plays a role in tissue-specific gene regulation. Required for primitive hemopoiesis, acting upstream of tal1/scl. The sequence is that of Nucleosome assembly protein 1-like 1-B (nap1l1-b) from Xenopus laevis (African clawed frog).